We begin with the raw amino-acid sequence, 206 residues long: Large ribosomal subunit protein uL4 (206 aa).

The disordered stretch occupies residues 48–97; sequence THAVKNRSLVSGGGKKPWKQKHTGRARQGSTRASQWVGGGKAMGPKPRDY. A compositionally biased stretch (basic residues) spans 63-72; it reads KPWKQKHTGR.

Belongs to the universal ribosomal protein uL4 family. In terms of assembly, part of the 50S ribosomal subunit.

Functionally, one of the primary rRNA binding proteins, this protein initially binds near the 5'-end of the 23S rRNA. It is important during the early stages of 50S assembly. It makes multiple contacts with different domains of the 23S rRNA in the assembled 50S subunit and ribosome. Forms part of the polypeptide exit tunnel. The protein is Large ribosomal subunit protein uL4 of Anaeromyxobacter dehalogenans (strain 2CP-C).